A 1229-amino-acid polypeptide reads, in one-letter code: Chitin synthase 4 (1229 aa).

The interval 1-196 (MSLPERPGAK…IVKEGKRKEK (196 aa)) is disordered. Residues 1–202 (MSLPERPGAK…RKEKIPEQLR (202 aa)) lie on the Cytoplasmic side of the membrane. Over residues 18–27 (SYRKSPSRRN) the composition is skewed to basic residues. The span at 43-66 (GQHQRGPSVNSFAETIRSPNSNIE) shows a compositional bias: polar residues. A compositionally biased stretch (basic and acidic residues) spans 92–105 (IRPERNRIDRDHPN). The segment covering 137-150 (SGPPSGSNSASGSG) has biased composition (low complexity). Basic and acidic residues-rich tracts occupy residues 164–177 (SGRETVAEKSDNTR) and 187–196 (IVKEGKRKEK). A helical membrane pass occupies residues 203–223 (PPSAWNVYCAVITFWSPDFIM). Residues 224–240 (KCCGMPAKAQRRAWREK) lie on the Extracellular side of the membrane. A helical membrane pass occupies residues 241 to 261 (IGLISLILIIMGVVGFLTFGF). Over 262–495 (NQAVCGGPVL…IKVGTVDTDT (234 aa)) the chain is Cytoplasmic. A helical transmembrane segment spans residues 496–516 (VGCIAAKVVLYVSLALILSVV). Residues 517–1054 (GARFTLALIF…LCGTFCFSMQ (538 aa)) lie on the Extracellular side of the membrane. Disordered regions lie at residues 539-589 (TSQT…RSSF) and 601-648 (GAER…DPYA). A compositionally biased stretch (low complexity) spans 568–581 (GDVGSSVAGASSSD). Residues Asn-608, Asn-635, and Asn-1030 are each glycosylated (N-linked (GlcNAc...) asparagine). Polar residues predominate over residues 608 to 648 (NKSMPTTMASQASGGYMGPSSTAYRETNESRTSFLKSDPYA). A helical membrane pass occupies residues 1055–1075 (FVIFIELIGTLVLPAAIAFTF). Over 1076–1088 (YVVIISIINQPPQ) the chain is Cytoplasmic. Residues 1089-1109 (IIPLVLLGLILGLPAILIIIT) traverse the membrane as a helical segment. The Extracellular segment spans residues 1110–1114 (AHSWS). A helical transmembrane segment spans residues 1115–1135 (YVLWMLIYLLSLPVWNFVLPA). The Cytoplasmic portion of the chain corresponds to 1136–1229 (YAFWKFDDFS…QQYDEYYSDA (94 aa)). Residues 1210 to 1229 (WASAPPHHHQQQYDEYYSDA) form a disordered region.

The protein belongs to the chitin synthase family. Class IV subfamily.

Its subcellular location is the cell membrane. It carries out the reaction [(1-&gt;4)-N-acetyl-beta-D-glucosaminyl](n) + UDP-N-acetyl-alpha-D-glucosamine = [(1-&gt;4)-N-acetyl-beta-D-glucosaminyl](n+1) + UDP + H(+). Its function is as follows. Polymerizes chitin, a structural polymer of the cell wall and septum, by transferring the sugar moiety of UDP-GlcNAc to the non-reducing end of the growing chitin polymer. Might function as a negative regulator on expression of other CHS genes. This is Chitin synthase 4 from Pyricularia oryzae (strain 70-15 / ATCC MYA-4617 / FGSC 8958) (Rice blast fungus).